The primary structure comprises 670 residues: UvrABC system protein B (670 aa).

One can recognise a Helicase ATP-binding domain in the interval 26–183; that stretch reads EGLENGLAHQ…RRLSELQYSR (158 aa). 39–46 provides a ligand contact to ATP; it reads GVTGSGKT. The short motif at 92–115 is the Beta-hairpin element; that stretch reads YYDYYQPEAYVPSSDTFIEKDASV. The Helicase C-terminal domain maps to 431-597; it reads QVDDLLSEIR…GLNKKIGDIL (167 aa). The segment at 600–620 is disordered; it reads GQPSTRGKGKGRGGKVADTNN. One can recognise a UVR domain in the interval 630 to 665; it reads DQKIRELEAKMYTHAQNLEFEQAAELRDQVHQLRQQ.

This sequence belongs to the UvrB family. As to quaternary structure, forms a heterotetramer with UvrA during the search for lesions. Interacts with UvrC in an incision complex.

It is found in the cytoplasm. Its function is as follows. The UvrABC repair system catalyzes the recognition and processing of DNA lesions. A damage recognition complex composed of 2 UvrA and 2 UvrB subunits scans DNA for abnormalities. Upon binding of the UvrA(2)B(2) complex to a putative damaged site, the DNA wraps around one UvrB monomer. DNA wrap is dependent on ATP binding by UvrB and probably causes local melting of the DNA helix, facilitating insertion of UvrB beta-hairpin between the DNA strands. Then UvrB probes one DNA strand for the presence of a lesion. If a lesion is found the UvrA subunits dissociate and the UvrB-DNA preincision complex is formed. This complex is subsequently bound by UvrC and the second UvrB is released. If no lesion is found, the DNA wraps around the other UvrB subunit that will check the other stand for damage. The protein is UvrABC system protein B of Yersinia enterocolitica serotype O:8 / biotype 1B (strain NCTC 13174 / 8081).